The sequence spans 322 residues: MLNSFKLSLQYILPKLWLTRLAGWGASKRAGWLTKLVIDLFVKYYKVDMKEAQKPDTASYRTFNEFFVRPLRDEVRPIDTDPNVLVMPADGVISQLGKIEEDKILQAKGHNYSLEALLAGNYLMANLFRNGTFVTTYLSPRDYHRVHMPCNGILREMIYVPGDLFSVNHLTAQNVPNLFARNERVICLFDTEFGPMAQILVGATIVGSIETVWAGTITPPREGIIKRWTWPAGENDGSVALLKGQEMGRFKLGSTVINLFAPGKVNLVEQLESLSVTKIGQPLAVSTETFVTPDAEPAPLPAEEIEAEHDASPLVDDKKDQV.

Residues D90, H147, and S254 each act as charge relay system; for autoendoproteolytic cleavage activity in the active site. Catalysis depends on S254, which acts as the Schiff-base intermediate with substrate; via pyruvic acid; for decarboxylase activity. Residue S254 is modified to Pyruvic acid (Ser); by autocatalysis. Residues 293–322 (PDAEPAPLPAEEIEAEHDASPLVDDKKDQV) are disordered. A compositionally biased stretch (basic and acidic residues) spans 308 to 322 (EHDASPLVDDKKDQV).

The protein belongs to the phosphatidylserine decarboxylase family. PSD-B subfamily. Prokaryotic type I sub-subfamily. Heterodimer of a large membrane-associated beta subunit and a small pyruvoyl-containing alpha subunit. It depends on pyruvate as a cofactor. Is synthesized initially as an inactive proenzyme. Formation of the active enzyme involves a self-maturation process in which the active site pyruvoyl group is generated from an internal serine residue via an autocatalytic post-translational modification. Two non-identical subunits are generated from the proenzyme in this reaction, and the pyruvate is formed at the N-terminus of the alpha chain, which is derived from the carboxyl end of the proenzyme. The autoendoproteolytic cleavage occurs by a canonical serine protease mechanism, in which the side chain hydroxyl group of the serine supplies its oxygen atom to form the C-terminus of the beta chain, while the remainder of the serine residue undergoes an oxidative deamination to produce ammonia and the pyruvoyl prosthetic group on the alpha chain. During this reaction, the Ser that is part of the protease active site of the proenzyme becomes the pyruvoyl prosthetic group, which constitutes an essential element of the active site of the mature decarboxylase.

It is found in the cell membrane. The enzyme catalyses a 1,2-diacyl-sn-glycero-3-phospho-L-serine + H(+) = a 1,2-diacyl-sn-glycero-3-phosphoethanolamine + CO2. The protein operates within phospholipid metabolism; phosphatidylethanolamine biosynthesis; phosphatidylethanolamine from CDP-diacylglycerol: step 2/2. Its function is as follows. Catalyzes the formation of phosphatidylethanolamine (PtdEtn) from phosphatidylserine (PtdSer). This chain is Phosphatidylserine decarboxylase proenzyme, found in Escherichia coli (strain 55989 / EAEC).